Consider the following 201-residue polypeptide: Protein S40-5 (201 aa).

Disordered regions lie at residues 1 to 39 (MARGRKLTMSQSERYLGSSYSYGDSNGNSATDESELTEE) and 134 to 178 (SIHE…EGVG). A compositionally biased stretch (low complexity) spans 17 to 29 (GSSYSYGDSNGNS).

It belongs to the senescence regulator S40 family.

The protein localises to the cytoplasm. This Arabidopsis thaliana (Mouse-ear cress) protein is Protein S40-5.